The following is a 248-amino-acid chain: MSRLPVVALLAAAGRGTRLGGPIPKAFVTLRGRSLVERSLRAMLTSEVVDEVIILVSPDMEDYARELLTRRGLLNDPEGVRVRLVHGGGERADSVWAGLQAIDHDDAIVLIHDSARALTPPGMIARVARMVADGAPAVIPVVPVADTIKRVDGSTVVDTPNRADLRAVQTPQGFLLSRLRAANEKFFATPDPGFIPTDDASLMEWYGVEVTCVQGDPMAFKVTTPIDMMLAQRITDEAEPTIFEVPGD.

This sequence belongs to the IspD/TarI cytidylyltransferase family. IspD subfamily.

The enzyme catalyses 2-C-methyl-D-erythritol 4-phosphate + CTP + H(+) = 4-CDP-2-C-methyl-D-erythritol + diphosphate. It functions in the pathway isoprenoid biosynthesis; isopentenyl diphosphate biosynthesis via DXP pathway; isopentenyl diphosphate from 1-deoxy-D-xylulose 5-phosphate: step 2/6. Catalyzes the formation of 4-diphosphocytidyl-2-C-methyl-D-erythritol from CTP and 2-C-methyl-D-erythritol 4-phosphate (MEP). The polypeptide is 2-C-methyl-D-erythritol 4-phosphate cytidylyltransferase (Corynebacterium efficiens (strain DSM 44549 / YS-314 / AJ 12310 / JCM 11189 / NBRC 100395)).